A 239-amino-acid chain; its full sequence is Pyridoxine 5'-phosphate synthase (239 aa).

Asn7 contacts 3-amino-2-oxopropyl phosphate. 9–10 (DH) lines the 1-deoxy-D-xylulose 5-phosphate pocket. Residue Arg18 participates in 3-amino-2-oxopropyl phosphate binding. His43 acts as the Proton acceptor in catalysis. Residues Arg45 and His50 each coordinate 1-deoxy-D-xylulose 5-phosphate. Catalysis depends on Glu70, which acts as the Proton acceptor. 1-deoxy-D-xylulose 5-phosphate is bound at residue Thr100. His191 (proton donor) is an active-site residue. Residues Gly192 and 213 to 214 (GH) contribute to the 3-amino-2-oxopropyl phosphate site.

The protein belongs to the PNP synthase family. Homooctamer; tetramer of dimers.

The protein localises to the cytoplasm. The enzyme catalyses 3-amino-2-oxopropyl phosphate + 1-deoxy-D-xylulose 5-phosphate = pyridoxine 5'-phosphate + phosphate + 2 H2O + H(+). It functions in the pathway cofactor biosynthesis; pyridoxine 5'-phosphate biosynthesis; pyridoxine 5'-phosphate from D-erythrose 4-phosphate: step 5/5. In terms of biological role, catalyzes the complicated ring closure reaction between the two acyclic compounds 1-deoxy-D-xylulose-5-phosphate (DXP) and 3-amino-2-oxopropyl phosphate (1-amino-acetone-3-phosphate or AAP) to form pyridoxine 5'-phosphate (PNP) and inorganic phosphate. This chain is Pyridoxine 5'-phosphate synthase, found in Geobacter sp. (strain M21).